Here is a 26-residue protein sequence, read N- to C-terminus: Mitochondrial import receptor subunit TOM7-2 (26 aa).

Belongs to the Tom7 family. In terms of assembly, forms part of the preprotein translocase complex of the outer mitochondrial membrane (TOM complex).

Its subcellular location is the mitochondrion outer membrane. Seems to act as a modulator of the dynamics of the mitochondrial protein transport machinery. Seems to promote the dissociation of subunits of the outer membrane translocase. This Solanum tuberosum (Potato) protein is Mitochondrial import receptor subunit TOM7-2 (TOM7-2).